The primary structure comprises 807 residues: 1,4-alpha-glucan branching enzyme GlgB (807 aa).

The Nucleophile role is filled by D405. E458 acts as the Proton donor in catalysis.

This sequence belongs to the glycosyl hydrolase 13 family. GlgB subfamily. Monomer.

The catalysed reaction is Transfers a segment of a (1-&gt;4)-alpha-D-glucan chain to a primary hydroxy group in a similar glucan chain.. It functions in the pathway glycan biosynthesis; glycogen biosynthesis. In terms of biological role, catalyzes the formation of the alpha-1,6-glucosidic linkages in glycogen by scission of a 1,4-alpha-linked oligosaccharide from growing alpha-1,4-glucan chains and the subsequent attachment of the oligosaccharide to the alpha-1,6 position. This Histophilus somni (strain 129Pt) (Haemophilus somnus) protein is 1,4-alpha-glucan branching enzyme GlgB.